The chain runs to 1014 residues: DNA translocase FtsK 2 (1014 aa).

A helical transmembrane segment spans residues 1–21 (MFWIVLIVILLLALAGLFFVR). 3 disordered regions span residues 89-142 (ESEP…EDIA), 283-318 (RHAG…RRRV), and 487-525 (SQAV…AVSE). Over residues 121–140 (EEAETEEAEAAEEEAADTED) the composition is skewed to acidic residues. Residues 298–307 (DVSQGQSVSD) are compositionally biased toward polar residues. Positions 662 to 871 (GQPVVTDLGK…FQVSSKIDSR (210 aa)) constitute a FtsK domain. 682–687 (GSGKSV) is a binding site for ATP.

Belongs to the FtsK/SpoIIIE/SftA family. As to quaternary structure, homohexamer. Forms a ring that surrounds DNA.

It is found in the cell inner membrane. Functionally, essential cell division protein that coordinates cell division and chromosome segregation. The N-terminus is involved in assembly of the cell-division machinery. The C-terminus functions as a DNA motor that moves dsDNA in an ATP-dependent manner towards the dif recombination site, which is located within the replication terminus region. Translocation stops specifically at Xer-dif sites, where FtsK interacts with the Xer recombinase, allowing activation of chromosome unlinking by recombination. FtsK orienting polar sequences (KOPS) guide the direction of DNA translocation. FtsK can remove proteins from DNA as it translocates, but translocation stops specifically at XerCD-dif site, thereby preventing removal of XerC and XerD from dif. The sequence is that of DNA translocase FtsK 2 (ftsK2) from Neisseria meningitidis serogroup A / serotype 4A (strain DSM 15465 / Z2491).